Consider the following 57-residue polypeptide: UPF0391 membrane protein RPB_2024 (57 aa).

The next 2 helical transmembrane spans lie at 4–24 and 30–50; these read WVVTFLVVALIAGLLGFGGIA and IAKVIFFIAIVLFLVSAVVGL.

It belongs to the UPF0391 family.

It is found in the cell membrane. The polypeptide is UPF0391 membrane protein RPB_2024 (Rhodopseudomonas palustris (strain HaA2)).